We begin with the raw amino-acid sequence, 421 residues long: Putative NBPF family member NBPF7 (421 aa).

Residues 87-143 (IKSMLREELQFKEEKLAEQLKQAEELRQYKVLVHSQERELIQLREKLREGRDASHSL) adopt a coiled-coil conformation. Disordered stretches follow at residues 179–251 (VHKL…KITS), 312–334 (EKEV…HDVS), and 402–421 (YNSK…FTED). 2 Olduvai domains span residues 190–279 (EDEN…NILL) and 280–391 (ENQN…RMSQ). The segment covering 194 to 217 (DKTKELDKVQESPAPREEQKAEEK) has biased composition (basic and acidic residues). Residues 230 to 243 (TYSNSHGPSDSNPP) are compositionally biased toward polar residues. Basic and acidic residues predominate over residues 312 to 333 (EKEVLQDSPEERVTTSCSDHDV). A compositionally biased stretch (polar residues) spans 403-421 (NSKPSSIPNTTLQGSFTED).

This sequence belongs to the NBPF family.

Its subcellular location is the cytoplasm. The sequence is that of Putative NBPF family member NBPF7 from Homo sapiens (Human).